A 725-amino-acid chain; its full sequence is mRNA decay activator protein ZFP36L3 (725 aa).

The span at Met1–Gly25 shows a compositional bias: low complexity. Positions Met1 to Thr119 are disordered. 2 stretches are compositionally biased toward polar residues: residues Ala42–Ala72 and His100–Thr119. 2 C3H1-type zinc fingers span residues Arg122–Arg150 and Lys160–Pro188. Residues Val193 to Ser711 form a necessary for cytoplasmic localization region. The segment at Ser276–Gly310 is disordered. The segment covering His280–Pro294 has biased composition (basic and acidic residues). 4 helical membrane passes run Leu380–Leu400, Ala420–Met440, Ala441–Gly461, and Ala468–Val488. The tract at residues Asp686–Asn709 is disordered. The span at Arg693–Glu702 shows a compositional bias: low complexity.

As to expression, expressed in placenta and extraembryonic tissues (at protein level). Not detected in embryos and fetus.

The protein localises to the cytoplasm. It is found in the membrane. In terms of biological role, placenta-specific zinc-finger RNA-binding protein that destabilizes cytoplasmic AU-rich element (ARE)-containing mRNA transcripts by promoting their poly(A) tail removal or deadenylation, and hence provide a mechanism for attenuating protein synthesis. Binds to the 3'-UTR ARE of placental target mRNAs, such as TNF, HBEGF and LIPG. Involved in placental expression of many genes important for normal placental physiology. This Mus musculus (Mouse) protein is mRNA decay activator protein ZFP36L3.